The following is a 375-amino-acid chain: DNA replication and repair protein RecF (375 aa).

Residue 30–37 (GENAQGKT) coordinates ATP.

The protein belongs to the RecF family.

It localises to the cytoplasm. In terms of biological role, the RecF protein is involved in DNA metabolism; it is required for DNA replication and normal SOS inducibility. RecF binds preferentially to single-stranded, linear DNA. It also seems to bind ATP. The protein is DNA replication and repair protein RecF of Bacillus anthracis (strain A0248).